The following is a 204-amino-acid chain: MHPISIITGRIVALPAHDIDTDQIIPARYLKVTDKSGLAEGLFYAWRFDAEGKPNPDFVLNRPEAQGATILVAGRNFGCGSSREHAPWALQGYGFKAVISPSFADIFRNNALKNGLLTVQTDEETWQQLVSLFEEDPTTEVIIDLATQTVTLPDGRQARFPIDPFTKHCLLQGIDQMGFLLNEEDAISAYESAHPPRVVTTARS.

Belongs to the LeuD family. LeuD type 1 subfamily. As to quaternary structure, heterodimer of LeuC and LeuD.

The enzyme catalyses (2R,3S)-3-isopropylmalate = (2S)-2-isopropylmalate. The protein operates within amino-acid biosynthesis; L-leucine biosynthesis; L-leucine from 3-methyl-2-oxobutanoate: step 2/4. Catalyzes the isomerization between 2-isopropylmalate and 3-isopropylmalate, via the formation of 2-isopropylmaleate. The polypeptide is 3-isopropylmalate dehydratase small subunit (Roseiflexus castenholzii (strain DSM 13941 / HLO8)).